The chain runs to 175 residues: Ribulose bisphosphate carboxylase small subunit, chloroplastic 2 (175 aa).

Residues methionine 1–lysine 46 constitute a chloroplast transit peptide.

This sequence belongs to the RuBisCO small chain family. In terms of assembly, heterohexadecamer of 8 large and 8 small subunits.

Its subcellular location is the plastid. It localises to the chloroplast. Its function is as follows. RuBisCO catalyzes two reactions: the carboxylation of D-ribulose 1,5-bisphosphate, the primary event in carbon dioxide fixation, as well as the oxidative fragmentation of the pentose substrate. Both reactions occur simultaneously and in competition at the same active site. Although the small subunit is not catalytic it is essential for maximal activity. This is Ribulose bisphosphate carboxylase small subunit, chloroplastic 2 from Oryza sativa subsp. japonica (Rice).